A 376-amino-acid polypeptide reads, in one-letter code: PqqA peptide cyclase (376 aa).

The Radical SAM core domain occupies V4–D219. C18, C22, and C25 together coordinate [4Fe-4S] cluster.

Belongs to the radical SAM superfamily. PqqE family. As to quaternary structure, interacts with PqqD. The interaction is necessary for activity of PqqE. [4Fe-4S] cluster serves as cofactor.

The enzyme catalyses [PQQ precursor protein] + S-adenosyl-L-methionine = E-Y cross-linked-[PQQ precursor protein] + 5'-deoxyadenosine + L-methionine + H(+). It participates in cofactor biosynthesis; pyrroloquinoline quinone biosynthesis. In terms of biological role, catalyzes the cross-linking of a glutamate residue and a tyrosine residue in the PqqA protein as part of the biosynthesis of pyrroloquinoline quinone (PQQ). This is PqqA peptide cyclase from Xanthomonas campestris pv. campestris (strain 8004).